Consider the following 21-residue polypeptide: Endo-1,4-beta-xylanase A (21 aa).

It belongs to the glycosyl hydrolase 10 (cellulase F) family.

The catalysed reaction is Endohydrolysis of (1-&gt;4)-beta-D-xylosidic linkages in xylans.. It functions in the pathway glycan degradation; xylan degradation. This chain is Endo-1,4-beta-xylanase A, found in Dictyoglomus sp. (strain B4A).